Here is a 505-residue protein sequence, read N- to C-terminus: Ookinete surface protein PIMMS43 (505 aa).

The N-terminal stretch at 1–24 (MQKRIYVSLFFLVFFLSKISVVLS) is a signal peptide. Residues 188 to 221 (ERRKKKLDDEQKRQKDLEDTNRKENDEEQSYKKL) are disordered. The chain crosses the membrane as a helical span at residues 485–505 (SSIYSSIKYFFLLMLFVIYIL).

As to quaternary structure, monomer. May form multimers with an unknown protein(s).

Its subcellular location is the membrane. In terms of biological role, involved in ookinete evasion of the mosquito complement-like response, oocyst maturation, sporozoite development and infectivity. The protein is Ookinete surface protein PIMMS43 of Plasmodium falciparum (isolate 3D7).